The following is a 494-amino-acid chain: UPF0371 protein SP_0341 (494 aa).

The protein belongs to the UPF0371 family.

This is UPF0371 protein SP_0341 from Streptococcus pneumoniae serotype 4 (strain ATCC BAA-334 / TIGR4).